Consider the following 311-residue polypeptide: Urease accessory protein UreD 3 (311 aa).

It belongs to the UreD family. In terms of assembly, ureD, UreF and UreG form a complex that acts as a GTP-hydrolysis-dependent molecular chaperone, activating the urease apoprotein by helping to assemble the nickel containing metallocenter of UreC. The UreE protein probably delivers the nickel.

The protein localises to the cytoplasm. Functionally, required for maturation of urease via the functional incorporation of the urease nickel metallocenter. In Methylorubrum populi (strain ATCC BAA-705 / NCIMB 13946 / BJ001) (Methylobacterium populi), this protein is Urease accessory protein UreD 3.